The sequence spans 494 residues: Inosine-5'-monophosphate dehydrogenase (494 aa).

CBS domains are found at residues 93 to 154 (IIRN…NEKI) and 158 to 217 (MTTD…CKDM). Residues aspartate 251 and 301-303 (GIG) each bind NAD(+). Glycine 303 and glycine 305 together coordinate K(+). Serine 306 contributes to the IMP binding site. Residue cysteine 308 participates in K(+) binding. The Thioimidate intermediate role is filled by cysteine 308. IMP contacts are provided by residues 341 to 343 (DGG), 364 to 365 (GS), and 388 to 392 (YRGMG). The active-site Proton acceptor is the arginine 406. Glutamate 421 is a binding site for IMP. 3 residues coordinate K(+): glutamate 475, serine 476, and histidine 477.

The protein belongs to the IMPDH/GMPR family. In terms of assembly, homotetramer. The cofactor is K(+).

The enzyme catalyses IMP + NAD(+) + H2O = XMP + NADH + H(+). It participates in purine metabolism; XMP biosynthesis via de novo pathway; XMP from IMP: step 1/1. With respect to regulation, mycophenolic acid (MPA) is a non-competitive inhibitor that prevents formation of the closed enzyme conformation by binding to the same site as the amobile flap. In contrast, mizoribine monophosphate (MZP) is a competitive inhibitor that induces the closed conformation. MPA is a potent inhibitor of mammalian IMPDHs but a poor inhibitor of the bacterial enzymes. MZP is a more potent inhibitor of bacterial IMPDH. Catalyzes the conversion of inosine 5'-phosphate (IMP) to xanthosine 5'-phosphate (XMP), the first committed and rate-limiting step in the de novo synthesis of guanine nucleotides, and therefore plays an important role in the regulation of cell growth. This Chlorobaculum parvum (strain DSM 263 / NCIMB 8327) (Chlorobium vibrioforme subsp. thiosulfatophilum) protein is Inosine-5'-monophosphate dehydrogenase.